Reading from the N-terminus, the 522-residue chain is Peptide chain release factor 3 (522 aa).

One can recognise a tr-type G domain in the interval 10-277 (ASRKTFAIIS…TFVDFAPAPS (268 aa)). GTP-binding positions include 19–26 (SHPDAGKT), 87–91 (DTPGH), and 141–144 (NKMD).

This sequence belongs to the TRAFAC class translation factor GTPase superfamily. Classic translation factor GTPase family. PrfC subfamily.

It localises to the cytoplasm. Its function is as follows. Increases the formation of ribosomal termination complexes and stimulates activities of RF-1 and RF-2. It binds guanine nucleotides and has strong preference for UGA stop codons. It may interact directly with the ribosome. The stimulation of RF-1 and RF-2 is significantly reduced by GTP and GDP, but not by GMP. The chain is Peptide chain release factor 3 from Listeria welshimeri serovar 6b (strain ATCC 35897 / DSM 20650 / CCUG 15529 / CIP 8149 / NCTC 11857 / SLCC 5334 / V8).